Reading from the N-terminus, the 505-residue chain is DNA repair protein RadA (505 aa).

A C4-type zinc finger spans residues 10–27 (CSACGADHAQWFGRCPKC). 107–114 (GDPGIGKS) contributes to the ATP binding site. The short motif at 281 to 285 (KNRFG) is the RadA KNRFG motif element. Positions 380 to 505 (DAYLSVAGGL…KIEEDLGKKD (126 aa)) are lon-protease-like. The interval 485–505 (NTTDQGNGSEAKIEEDLGKKD) is disordered. The segment covering 495 to 505 (AKIEEDLGKKD) has biased composition (basic and acidic residues).

Belongs to the RecA family. RadA subfamily.

DNA-dependent ATPase involved in processing of recombination intermediates, plays a role in repairing DNA breaks. Stimulates the branch migration of RecA-mediated strand transfer reactions, allowing the 3' invading strand to extend heteroduplex DNA faster. Binds ssDNA in the presence of ADP but not other nucleotides, has ATPase activity that is stimulated by ssDNA and various branched DNA structures, but inhibited by SSB. Does not have RecA's homology-searching function. The polypeptide is DNA repair protein RadA (Synechocystis sp. (strain ATCC 27184 / PCC 6803 / Kazusa)).